A 250-amino-acid chain; its full sequence is Kv channel-interacting protein 4 (250 aa).

The interval 2 to 44 is KIS; sequence NVRRVESISAQLEEASSTGGFLYTQNSTKRSIKERLMKLLPCS. Residues serine 17 and serine 56 each carry the phosphoserine modification. The region spanning 61–117 is the EF-hand 1; degenerate domain; that stretch reads LEMATVRHRPEALELLEAQSKFTKKELQILYRGFKNECPSGVVNEDTFKEIYSQFFP. EF-hand domains follow at residues 120–155, 156–191, and 204–239; these read DSTT…LLRG, TVQE…IYDM, and APRQ…DENI. Ca(2+) contacts are provided by aspartate 133, aspartate 135, asparagine 137, aspartate 144, aspartate 169, asparagine 171, aspartate 173, tyrosine 175, glutamate 180, aspartate 217, asparagine 219, aspartate 221, and glutamate 228. Positions 237 to 250 are interaction with KCND2; the sequence is ENIMRSMQLFENVI.

This sequence belongs to the recoverin family. Component of heteromultimeric potassium channels. Identified in potassium channel complexes containing KCND1, KCND2, KCND3, KCNIP1, KCNIP2, KCNIP3, KCNIP4, DPP6 and DPP10. Interacts with KCND2. Interacts with KCND3. Interacts with the C-terminus of PSEN2 and probably PSEN1.

It is found in the cell membrane. Its subcellular location is the cytoplasm. The protein resides in the peroxisome. Its function is as follows. Regulatory subunit of Kv4/D (Shal)-type voltage-gated rapidly inactivating A-type potassium channels. Modulates KCND2 channel density, inactivation kinetics and rate of recovery from inactivation in a calcium-dependent and isoform-specific manner. Modulates KCND3/Kv4.3 currents. Isoform 4 does not increase KCND2 expression at the cell membrane. Isoform 4 retains KCND3 in the endoplasmic reticulum and negatively regulates its expression at the cell membrane. The chain is Kv channel-interacting protein 4 (KCNIP4) from Bos taurus (Bovine).